We begin with the raw amino-acid sequence, 496 residues long: Alanine aminotransferase 1 (496 aa).

An N-acetylalanine modification is found at alanine 2. Residue threonine 22 is modified to Phosphothreonine. Position 314 is an N6-(pyridoxal phosphate)lysine (lysine 314).

It belongs to the class-I pyridoxal-phosphate-dependent aminotransferase family. Alanine aminotransferase subfamily. As to quaternary structure, homodimer. Pyridoxal 5'-phosphate serves as cofactor. In terms of tissue distribution, liver, heart, skeletal muscle, etc.

It is found in the cytoplasm. The catalysed reaction is L-alanine + 2-oxoglutarate = pyruvate + L-glutamate. Its pathway is amino-acid degradation; L-alanine degradation via transaminase pathway; pyruvate from L-alanine: step 1/1. Its function is as follows. Catalyzes the reversible transamination between alanine and 2-oxoglutarate to form pyruvate and glutamate. Participates in cellular nitrogen metabolism and also in liver gluconeogenesis starting with precursors transported from skeletal muscles. This chain is Alanine aminotransferase 1 (Gpt), found in Rattus norvegicus (Rat).